Reading from the N-terminus, the 383-residue chain is Homeobox protein knotted-1-like 5 (383 aa).

Disordered stretches follow at residues 1–35 (MSFN…HFSE) and 52–73 (TTAD…ADTN). The ELK domain occupies 281-301 (ELKHELKQGFKEKIVDIREEI). Residues 302–365 (MRKRRAGKLP…NQRKRNWNSN (64 aa)) constitute a DNA-binding region (homeobox; TALE-type). Residues 361–383 (NWNSNSSTSSTLTKNKRKRTGKS) are disordered. Over residues 362–373 (WNSNSSTSSTLT) the composition is skewed to low complexity. Residues 374 to 383 (KNKRKRTGKS) show a composition bias toward basic residues.

It belongs to the TALE/KNOX homeobox family. May form heterodimeric complex with the TALE/BELL protein BEL1, BLH1 and BLH2. Interacts with OFP1, OFP2, OFP3 and OFP4.

The protein localises to the nucleus. This is Homeobox protein knotted-1-like 5 (KNAT5) from Arabidopsis thaliana (Mouse-ear cress).